We begin with the raw amino-acid sequence, 413 residues long: 4-hydroxy-3-methylbut-2-en-1-yl diphosphate synthase (flavodoxin) (413 aa).

Residues C298, C301, C344, and E351 each contribute to the [4Fe-4S] cluster site.

This sequence belongs to the IspG family. Requires [4Fe-4S] cluster as cofactor.

The catalysed reaction is (2E)-4-hydroxy-3-methylbut-2-enyl diphosphate + oxidized [flavodoxin] + H2O + 2 H(+) = 2-C-methyl-D-erythritol 2,4-cyclic diphosphate + reduced [flavodoxin]. It participates in isoprenoid biosynthesis; isopentenyl diphosphate biosynthesis via DXP pathway; isopentenyl diphosphate from 1-deoxy-D-xylulose 5-phosphate: step 5/6. Functionally, converts 2C-methyl-D-erythritol 2,4-cyclodiphosphate (ME-2,4cPP) into 1-hydroxy-2-methyl-2-(E)-butenyl 4-diphosphate. In Koribacter versatilis (strain Ellin345), this protein is 4-hydroxy-3-methylbut-2-en-1-yl diphosphate synthase (flavodoxin).